Consider the following 310-residue polypeptide: HPr kinase/phosphorylase (310 aa).

Residues His138 and Lys159 contribute to the active site. 153–160 (GDSGIGKS) is an ATP binding site. A Mg(2+)-binding site is contributed by Ser160. Residue Asp177 is the Proton acceptor; for phosphorylation activity. Proton donor; for dephosphorylation activity of the active site. Residues 201-210 (LEIRGVGIID) are important for the catalytic mechanism of both phosphorylation and dephosphorylation. Glu202 serves as a coordination point for Mg(2+). Arg243 is a catalytic residue. The segment at 264-269 (PVQTGR) is important for the catalytic mechanism of dephosphorylation.

The protein belongs to the HPrK/P family. As to quaternary structure, homohexamer. The cofactor is Mg(2+). It depends on Mn(2+) as a cofactor.

The catalysed reaction is [HPr protein]-L-serine + ATP = [HPr protein]-O-phospho-L-serine + ADP + H(+). It catalyses the reaction [HPr protein]-O-phospho-L-serine + phosphate + H(+) = [HPr protein]-L-serine + diphosphate. Kinase activity is inhibited by inorganic phosphate (Pi). In contrast to many other bacteria, neither kinase activity nor phosphorylase activity is affected by fructose 1,6-bisphosphate (FBP). Its function is as follows. Catalyzes the ATP- as well as probably the pyrophosphate-dependent phosphorylation of 'Ser-46' in HPr, a phosphocarrier protein of the phosphoenolpyruvate-dependent sugar phosphotransferase system (PTS). HprK/P also catalyzes the pyrophosphate-producing, inorganic phosphate-dependent dephosphorylation (phosphorolysis) of seryl-phosphorylated HPr (P-Ser-HPr). The two antagonistic activities of HprK/P are regulated by several intracellular metabolites, which change their concentration in response to the absence or presence of rapidly metabolisable carbon sources (glucose, fructose, etc.) in the growth medium. Therefore, by controlling the phosphorylation state of HPr, the HPrK/P is a sensor enzyme that plays a major role in the regulation of carbon metabolism and sugar transport: it probably mediates carbon catabolite repression (CCR), and regulates PTS-catalyzed carbohydrate uptake and inducer exclusion. The protein is HPr kinase/phosphorylase (hprK) of Streptococcus equinus (Streptococcus bovis).